The following is a 229-amino-acid chain: Large ribosomal subunit protein uL1 (229 aa).

It belongs to the universal ribosomal protein uL1 family. Part of the 50S ribosomal subunit.

Binds directly to 23S rRNA. The L1 stalk is quite mobile in the ribosome, and is involved in E site tRNA release. In terms of biological role, protein L1 is also a translational repressor protein, it controls the translation of the L11 operon by binding to its mRNA. This Chlorobium phaeobacteroides (strain DSM 266 / SMG 266 / 2430) protein is Large ribosomal subunit protein uL1.